A 99-amino-acid chain; its full sequence is MATSNDQTNTKSSHSRTLLLLFIFLSLLLFSSLTIPMTRHQSTSMVAPFKRVLLESSVPASSTMDLRPKASTRRSRTSRRREFGNDAHEVPSGPNPISN.

The first 34 residues, 1 to 34 (MATSNDQTNTKSSHSRTLLLLFIFLSLLLFSSLT), serve as a signal peptide directing secretion. Residues 60 to 99 (ASSTMDLRPKASTRRSRTSRRREFGNDAHEVPSGPNPISN) are disordered. The segment covering 70 to 79 (ASTRRSRTSR) has biased composition (basic residues). The span at 80 to 89 (RREFGNDAHE) shows a compositional bias: basic and acidic residues. A hydroxyproline mark is found at Pro-91 and Pro-94. Pro-94 carries O-linked (Ara...) hydroxyproline glycosylation.

This sequence belongs to the CLV3/ESR signal peptide family. In terms of assembly, CLE41p interacts specifically with the leucine-rich repeat receptor-like protein kinase TDR. In terms of processing, the O-glycosylation (arabinosylation) of the hydroxyproline Pro-94 enhances binding affinity of the CLE41p peptide for its receptor. Mostly expressed in inflorescence and roots, and, to a lower extent, in seedlings, flowers, leaves and siliques. Observed along the vascular strands in cotyledons, leaves and roots, but not in shoot apical meristems (SAM). Restricted to the phloem and the neighboring pericycle cells in the roots and hypocotyls.

The protein localises to the secreted. Its subcellular location is the extracellular space. Its function is as follows. Extracellular signal peptide that regulates cell fate. May act with TDR as a ligand-receptor pair in a signal transduction pathway that represses tracheary element differentiation but promotes the formation of procambial cells adjacent to phloem cells in the veins in an auxin-dependent manner. Regulates the transition of protophloem cells from proliferation to differentiation, thus impinging on postembryonic growth capacity of the root meristem; this signaling pathway requires CRN and CLV2. This chain is CLAVATA3/ESR (CLE)-related protein 41, found in Arabidopsis thaliana (Mouse-ear cress).